A 433-amino-acid chain; its full sequence is Ascus wall endo-1,3-alpha-glucanase (433 aa).

The protein belongs to the glycosyl hydrolase 71 family.

It is found in the ascus epiplasm. The enzyme catalyses Endohydrolysis of (1-&gt;3)-alpha-D-glucosidic linkages in isolichenin, pseudonigeran and nigeran.. In terms of biological role, promotes the release of ascospores from asci by hydrolyzing 1,3-alpha-glucan in the ascus wall. In Schizosaccharomyces pombe (strain 972 / ATCC 24843) (Fission yeast), this protein is Ascus wall endo-1,3-alpha-glucanase.